Here is a 74-residue protein sequence, read N- to C-terminus: Molt-inhibiting hormone (74 aa).

The residue at position 1 (Q1) is a Pyrrolidone carboxylic acid. Cystine bridges form between C7-C43, C23-C39, and C26-C52. At V72 the chain carries Valine amide.

It localises to the secreted. In terms of biological role, inhibits Y-organs where molting hormone (ecdysteroid) is secreted. A molting cycle is initiated when MIH secretion diminishes or stops. This chain is Molt-inhibiting hormone, found in Procambarus bouvieri (Mexican crayfish).